A 162-amino-acid chain; its full sequence is Ribosome-binding factor A (162 aa).

Residues 123-162 (VARVAAGASPAGDPDPYKEPRVEDADDAEVDEPSRSRQAD) are disordered. Residues 125–136 (RVAAGASPAGDP) are compositionally biased toward low complexity.

This sequence belongs to the RbfA family. In terms of assembly, monomer. Binds 30S ribosomal subunits, but not 50S ribosomal subunits or 70S ribosomes.

It localises to the cytoplasm. In terms of biological role, one of several proteins that assist in the late maturation steps of the functional core of the 30S ribosomal subunit. Associates with free 30S ribosomal subunits (but not with 30S subunits that are part of 70S ribosomes or polysomes). Required for efficient processing of 16S rRNA. May interact with the 5'-terminal helix region of 16S rRNA. The polypeptide is Ribosome-binding factor A (Rhodococcus opacus (strain B4)).